The sequence spans 416 residues: MKSYLVGGAVRDALLGQPAGDCDWVVVGADPAHMKSLGFKPVGRDFPVFLHPKTGEEFALARTERKNGHGYRGFIVNADPTVTLEQDLQRRDFTINAIARDQTNSTLIDPYGGVNDLEQRVLRHISPAFAEDPLRVLRAARFMARLAPLGFSIAPETLAMMRQMVANGELNSLIPERIWKELSRSLAYTQPAAFLHTLRTVNALEVVLPELNALYGVPQHADYHPEIDTGLHQELVSDIAAKLAPGDMLIGFAALCHDLGKALTPRATWPHHPMHEQRGMAPTQQLSERLKVPRDYQQLALIACREHLNVHRLSKLHDHTVYELLQRCDAFRRPERIAQLAIVCEADYRGRYGHEDANYPQGQHLCRLHAAALAVNARDLNRQDLHGTQIGEALAQARIRAISSAGVYDGGTGTNF.

Residues Gly-8 and Arg-11 each contribute to the ATP site. 2 residues coordinate CTP: Gly-8 and Arg-11. Mg(2+) contacts are provided by Asp-21 and Asp-23. Positions 91, 138, and 141 each coordinate ATP. CTP-binding residues include Arg-91, Arg-138, and Arg-141. The region spanning 229–331 (TGLHQELVSD…YELLQRCDAF (103 aa)) is the HD domain.

The protein belongs to the tRNA nucleotidyltransferase/poly(A) polymerase family. Bacterial CCA-adding enzyme type 1 subfamily. In terms of assembly, monomer. Can also form homodimers and oligomers. Mg(2+) is required as a cofactor. Requires Ni(2+) as cofactor.

The enzyme catalyses a tRNA precursor + 2 CTP + ATP = a tRNA with a 3' CCA end + 3 diphosphate. It catalyses the reaction a tRNA with a 3' CCA end + 2 CTP + ATP = a tRNA with a 3' CCACCA end + 3 diphosphate. Functionally, catalyzes the addition and repair of the essential 3'-terminal CCA sequence in tRNAs without using a nucleic acid template. Adds these three nucleotides in the order of C, C, and A to the tRNA nucleotide-73, using CTP and ATP as substrates and producing inorganic pyrophosphate. tRNA 3'-terminal CCA addition is required both for tRNA processing and repair. Also involved in tRNA surveillance by mediating tandem CCA addition to generate a CCACCA at the 3' terminus of unstable tRNAs. While stable tRNAs receive only 3'-terminal CCA, unstable tRNAs are marked with CCACCA and rapidly degraded. The polypeptide is Multifunctional CCA protein (Xylella fastidiosa (strain M12)).